The following is a 289-amino-acid chain: Release factor glutamine methyltransferase (289 aa).

Residues 122–126 (GVGSG), Asp-145, Trp-174, and Asn-189 contribute to the S-adenosyl-L-methionine site. 189-192 (NPPY) serves as a coordination point for substrate.

It belongs to the protein N5-glutamine methyltransferase family. PrmC subfamily.

It catalyses the reaction L-glutaminyl-[peptide chain release factor] + S-adenosyl-L-methionine = N(5)-methyl-L-glutaminyl-[peptide chain release factor] + S-adenosyl-L-homocysteine + H(+). In terms of biological role, methylates the class 1 translation termination release factors RF1/PrfA and RF2/PrfB on the glutamine residue of the universally conserved GGQ motif. The sequence is that of Release factor glutamine methyltransferase from Caulobacter vibrioides (strain ATCC 19089 / CIP 103742 / CB 15) (Caulobacter crescentus).